The sequence spans 311 residues: Acyl-CoA dehydrogenase IpdE2 (311 aa).

2 residues coordinate FAD: Arg-206 and Gly-273.

The protein belongs to the acyl-CoA dehydrogenase family. Heterotetramer composed of 2 IpdE1 subunits and 2 IpdE2 subunits. The cofactor is FAD.

It carries out the reaction 3-[(3aS,4S,5R,7aS)-5-hydroxy-7a-methyl-1-oxo-octahydro-1H-inden-4-yl]propanoyl-CoA + A = (2E)-3-[(3aS,4S,5R,7aS)-5-hydroxy-7a-methyl-1-oxo-octahydro-1H-inden-4-yl]prop-2-enoyl-CoA + AH2. The protein operates within steroid metabolism; cholesterol degradation. Involved in cholesterol degradation. Catalyzes the dehydrogenation of 5OH-HIP-CoA to 5OH-HIPE-CoA. This Mycolicibacterium smegmatis (strain ATCC 700084 / mc(2)155) (Mycobacterium smegmatis) protein is Acyl-CoA dehydrogenase IpdE2.